A 363-amino-acid polypeptide reads, in one-letter code: Phospho-N-acetylmuramoyl-pentapeptide-transferase (363 aa).

Helical transmembrane passes span Thr-3–Ile-23, Val-55–Leu-75, Pro-76–Leu-96, Leu-116–Ala-136, Leu-158–Thr-178, Gly-190–Cys-210, Leu-237–Ser-257, Ile-261–Leu-281, Ile-286–Val-306, and Phe-340–Val-360.

This sequence belongs to the glycosyltransferase 4 family. MraY subfamily. It depends on Mg(2+) as a cofactor.

The protein localises to the cell membrane. It carries out the reaction UDP-N-acetyl-alpha-D-muramoyl-L-alanyl-gamma-D-glutamyl-meso-2,6-diaminopimeloyl-D-alanyl-D-alanine + di-trans,octa-cis-undecaprenyl phosphate = di-trans,octa-cis-undecaprenyl diphospho-N-acetyl-alpha-D-muramoyl-L-alanyl-D-glutamyl-meso-2,6-diaminopimeloyl-D-alanyl-D-alanine + UMP. It functions in the pathway cell wall biogenesis; peptidoglycan biosynthesis. In terms of biological role, catalyzes the initial step of the lipid cycle reactions in the biosynthesis of the cell wall peptidoglycan: transfers peptidoglycan precursor phospho-MurNAc-pentapeptide from UDP-MurNAc-pentapeptide onto the lipid carrier undecaprenyl phosphate, yielding undecaprenyl-pyrophosphoryl-MurNAc-pentapeptide, known as lipid I. The sequence is that of Phospho-N-acetylmuramoyl-pentapeptide-transferase from Kineococcus radiotolerans (strain ATCC BAA-149 / DSM 14245 / SRS30216).